Consider the following 507-residue polypeptide: Maturase K (507 aa).

The protein belongs to the intron maturase 2 family. MatK subfamily.

Its subcellular location is the plastid. The protein localises to the chloroplast. In terms of biological role, usually encoded in the trnK tRNA gene intron. Probably assists in splicing its own and other chloroplast group II introns. The chain is Maturase K from Magnolia champaca (Yellow jade orchid tree).